Reading from the N-terminus, the 37-residue chain is Delta/kappa-conotoxin Mo3964 (37 aa).

3 disulfide bridges follow: Cys4–Cys12, Cys11–Cys27, and Cys21–Cys34.

Expressed by the venom duct.

It is found in the secreted. In terms of biological role, this toxin reduces the outward currents that are due to the opening of voltage-gated potassium channels in DRG neurons. In addition, leftward shift in the presence of this toxin is observed in averaged normalized conductance-voltage plot of outward sodium currents (Nav1.2/SCN2A). This chain is Delta/kappa-conotoxin Mo3964, found in Conus monile (Necklace cone).